We begin with the raw amino-acid sequence, 123 residues long: Large ribosomal subunit protein bL12 (123 aa).

This sequence belongs to the bacterial ribosomal protein bL12 family. As to quaternary structure, homodimer. Part of the ribosomal stalk of the 50S ribosomal subunit. Forms a multimeric L10(L12)X complex, where L10 forms an elongated spine to which 2 to 4 L12 dimers bind in a sequential fashion. Binds GTP-bound translation factors.

Its function is as follows. Forms part of the ribosomal stalk which helps the ribosome interact with GTP-bound translation factors. Is thus essential for accurate translation. This Dehalococcoides mccartyi (strain ATCC BAA-2100 / JCM 16839 / KCTC 5957 / BAV1) protein is Large ribosomal subunit protein bL12.